A 51-amino-acid polypeptide reads, in one-letter code: Zinc metalloproteinase-disintegrin-like crovidisin (51 aa).

Residues alanine 1 to lysine 12 form the Peptidase M12B domain. The Disintegrin domain maps to serine 13–arginine 18. N-linked (GlcNAc...) asparagine glycosylation occurs at asparagine 29.

It belongs to the venom metalloproteinase (M12B) family. P-III subfamily. P-IIIa sub-subfamily. As to quaternary structure, monomer. Zn(2+) serves as cofactor. Expressed by the venom gland.

It localises to the secreted. In terms of biological role, snake venom zinc metalloproteinase-disintegrin-like that blocks the interaction between platelets and collagen fibers through its binding to collagen fibers, resulting in the blockade of collagen-mediated platelet functions such as adhesion, release reaction, thromboxane formation, and aggregation. Binds selectively to collagen type I with high affinity. Also exerts proteolytic activity to matrix. The chain is Zinc metalloproteinase-disintegrin-like crovidisin from Crotalus viridis viridis (Prairie rattlesnake).